The sequence spans 639 residues: Muscarinic acetylcholine receptor M3 (639 aa).

At 1–115 the chain is on the extracellular side; that stretch reads MLTHYQLCFQ…DPLGGHAVWQ (115 aa). N-linked (GlcNAc...) asparagine glycosylation is found at N16, N44, N45, N54, N97, and N101. A helical membrane pass occupies residues 116–139; sequence VVLIAFLTGIIALVTIIGNILVIV. At 140-152 the chain is on the cytoplasmic side; that stretch reads SFKVNKQLKTVNN. Residues 153-173 form a helical membrane-spanning segment; it reads YFLLSLACADLIIGVISMNLF. Topologically, residues 174–190 are extracellular; that stretch reads TTYIIMGHWALGNLACD. Residues C189 and C269 are joined by a disulfide bond. A helical transmembrane segment spans residues 191–212; it reads LWLSIDYVASNASVMNLLVISF. The Cytoplasmic portion of the chain corresponds to 213–232; that stretch reads DRYFSITRPLTYRAKRTTKR. The chain crosses the membrane as a helical span at residues 233-255; sequence AGVMIGLAWIISFVLWAPAILFW. The Extracellular segment spans residues 256–277; the sequence is QYFVGKRTVPLDECFIQFLSEP. Residues 278–300 form a helical membrane-spanning segment; that stretch reads IITFGTAIAAFYLPVTIMSILYW. The Cytoplasmic segment spans residues 301–542; that stretch reads RIYKETEKRT…LIKEKKAAQT (242 aa). Disordered stretches follow at residues 370-404 and 431-471; these read PNTD…DEED and LPSS…GGSF. Low complexity predominate over residues 382-393; sequence SDSWNNNDAAAS. Residues 443–454 show a composition bias toward basic and acidic residues; sequence ELQKSDTDSQEK. The chain crosses the membrane as a helical span at residues 543-563; it reads LSAILFAFIITWTPYNIMVLV. Topologically, residues 564 to 576 are extracellular; that stretch reads NTFCDCVPKTVWN. The chain crosses the membrane as a helical span at residues 577 to 596; that stretch reads LGYWLCYINSTVNPVCYALC. Residues 597–639 lie on the Cytoplasmic side of the membrane; the sequence is NKMFRNTFKMLLLCQCDKRKRRKQQYQQRQSVIFHKRIPREAS.

This sequence belongs to the G-protein coupled receptor 1 family. Muscarinic acetylcholine receptor subfamily. CHRM3 sub-subfamily. As to expression, brain, heart atria, and ventricle.

It is found in the cell membrane. It localises to the postsynaptic cell membrane. In terms of biological role, the muscarinic acetylcholine receptor mediates various cellular responses, including inhibition of adenylate cyclase, breakdown of phosphoinositides and modulation of potassium channels through the action of G proteins. Primary transducing effect is Pi turnover. The protein is Muscarinic acetylcholine receptor M3 (CHRM3) of Gallus gallus (Chicken).